A 516-amino-acid chain; its full sequence is Polyprenol-phosphate-mannose--protein mannosyltransferase (516 aa).

9 helical membrane-spanning segments follow: residues 113–133 (YNGL…VMLV), 143–163 (STLV…SFVS), 166–186 (TALL…CLMV), 234–254 (WSGL…DAIA), 275–295 (AAYV…APWF), 384–404 (VMLV…GWAL), 413–433 (WRYG…FADI), 437–457 (MYFF…ALIL), and 473–493 (LGLL…AWMY).

The protein belongs to the glycosyltransferase 39 family.

The protein localises to the cell membrane. The protein operates within protein modification; protein glycosylation. Its function is as follows. Protein O-mannosyltransferase that catalyzes the transfer of a single mannose residue from a polyprenol phospho-mannosyl lipidic donor to the hydroxyl group of selected serine and threonine residues in acceptor proteins. This chain is Polyprenol-phosphate-mannose--protein mannosyltransferase, found in Mycolicibacterium smegmatis (strain ATCC 700084 / mc(2)155) (Mycobacterium smegmatis).